Here is a 108-residue protein sequence, read N- to C-terminus: uncharacterized protein (108 aa).

Residues Thr75 to Thr94 are disordered. Residues Ser79–Thr94 show a composition bias toward low complexity.

This is an uncharacterized protein from Homo sapiens (Human).